Here is a 476-residue protein sequence, read N- to C-terminus: 3-isopropylmalate dehydratase large subunit (476 aa).

Residues cysteine 353, cysteine 413, and cysteine 416 each coordinate [4Fe-4S] cluster.

Belongs to the aconitase/IPM isomerase family. LeuC type 1 subfamily. Heterodimer of LeuC and LeuD. [4Fe-4S] cluster serves as cofactor.

It carries out the reaction (2R,3S)-3-isopropylmalate = (2S)-2-isopropylmalate. Its pathway is amino-acid biosynthesis; L-leucine biosynthesis; L-leucine from 3-methyl-2-oxobutanoate: step 2/4. Functionally, catalyzes the isomerization between 2-isopropylmalate and 3-isopropylmalate, via the formation of 2-isopropylmaleate. In Photobacterium profundum (strain SS9), this protein is 3-isopropylmalate dehydratase large subunit.